The sequence spans 44 residues: Photosystem I reaction center subunit IX (44 aa).

A helical transmembrane segment spans residues tyrosine 7–isoleucine 27.

The protein belongs to the PsaJ family.

It localises to the plastid. Its subcellular location is the chloroplast thylakoid membrane. Functionally, may help in the organization of the PsaE and PsaF subunits. The protein is Photosystem I reaction center subunit IX of Illicium oligandrum (Star anise).